Here is a 157-residue protein sequence, read N- to C-terminus: Succinate dehydrogenase assembly factor 2-A, mitochondrial (157 aa).

Residues 1–21 constitute a mitochondrion transit peptide; sequence MLRQVLSSTSVRRLLVSPTRC.

The protein belongs to the SDHAF2 family. Interacts with the flavoprotein subunit within the SDH catalytic dimer.

It is found in the mitochondrion matrix. Its function is as follows. Plays an essential role in the assembly of succinate dehydrogenase (SDH), an enzyme complex (also referred to as respiratory complex II) that is a component of both the tricarboxylic acid (TCA) cycle and the mitochondrial electron transport chain, and which couples the oxidation of succinate to fumarate with the reduction of ubiquinone (coenzyme Q) to ubiquinol. Required for flavinylation (covalent attachment of FAD) of the flavoprotein subunit of the SDH catalytic dimer. The chain is Succinate dehydrogenase assembly factor 2-A, mitochondrial from Drosophila mojavensis (Fruit fly).